The chain runs to 182 residues: Large ribosomal subunit protein bL25 (182 aa).

It belongs to the bacterial ribosomal protein bL25 family. CTC subfamily. As to quaternary structure, part of the 50S ribosomal subunit; part of the 5S rRNA/L5/L18/L25 subcomplex. Contacts the 5S rRNA. Binds to the 5S rRNA independently of L5 and L18.

Functionally, this is one of the proteins that binds to the 5S RNA in the ribosome where it forms part of the central protuberance. This is Large ribosomal subunit protein bL25 from Borreliella afzelii (strain PKo) (Borrelia afzelii).